The chain runs to 195 residues: HTH-type transcriptional regulator BetI (195 aa).

The 61-residue stretch at 8–68 folds into the HTH tetR-type domain; the sequence is PIRRRQLIDA…ATMRDITSQL (61 aa). The segment at residues 31–50 is a DNA-binding region (H-T-H motif); sequence TIAQIARRAGVSTGIISHYF.

Its pathway is amine and polyamine biosynthesis; betaine biosynthesis via choline pathway [regulation]. In terms of biological role, repressor involved in the biosynthesis of the osmoprotectant glycine betaine. It represses transcription of the choline transporter BetT and the genes of BetAB involved in the synthesis of glycine betaine. This is HTH-type transcriptional regulator BetI from Klebsiella pneumoniae (strain 342).